The following is a 524-amino-acid chain: GMP synthase [glutamine-hydrolyzing] (524 aa).

One can recognise a Glutamine amidotransferase type-1 domain in the interval 10 to 199 (PVLVVDFGAQ…LTEVAGLEQT (190 aa)). Cys-87 (nucleophile) is an active-site residue. Active-site residues include His-173 and Glu-175. A GMPS ATP-PPase domain is found at 200–398 (WTSANIAQQL…LGLPEEIVAR (199 aa)). Residue 228–234 (SGGVDSA) participates in ATP binding.

As to quaternary structure, homodimer.

It carries out the reaction XMP + L-glutamine + ATP + H2O = GMP + L-glutamate + AMP + diphosphate + 2 H(+). Its pathway is purine metabolism; GMP biosynthesis; GMP from XMP (L-Gln route): step 1/1. Functionally, catalyzes the synthesis of GMP from XMP. This is GMP synthase [glutamine-hydrolyzing] (guaA) from Corynebacterium ammoniagenes (Brevibacterium ammoniagenes).